Reading from the N-terminus, the 495-residue chain is Vacuolar-processing enzyme (495 aa).

The N-terminal stretch at 1–32 is a signal peptide; the sequence is MALDRSIISKTTWYSVVLWMMVVLVRVHGAAA. N-linked (GlcNAc...) asparagine glycosylation is present at Asn138. Residue His178 is part of the active site. The active-site Nucleophile is Cys220. Residues Cys253 and Cys267 are joined by a disulfide bond. N-linked (GlcNAc...) asparagine glycosylation is found at Asn320 and Asn376. 2 disulfide bridges follow: Cys431-Cys461 and Cys443-Cys478.

It belongs to the peptidase C13 family.

Functionally, asparagine-specific endopeptidase involved in the processing of vacuolar seed protein precursors into the mature forms. This Glycine max (Soybean) protein is Vacuolar-processing enzyme.